The primary structure comprises 549 residues: Probable acyl-activating enzyme 10 (549 aa).

The protein belongs to the ATP-dependent AMP-binding enzyme family. In terms of tissue distribution, expressed at low levels in roots.

May act as an acid--thiol ligase that activates carboxylic acids by forming acyl-CoAs. This Arabidopsis thaliana (Mouse-ear cress) protein is Probable acyl-activating enzyme 10 (AEE10).